A 278-amino-acid chain; its full sequence is MKNAPAVSFSAMPSADAERPILVFDSGIGGLTVLREARVLMPDRRFVYVADDAGFPYGGWEEDALRERIVELFGKLIAAYDPEIAVIACNTASTLVLDDLRQAYPSVPFVGTVPAIKPAAERTSSGLVSVLATPGTVRRAYTRDLIQSFATQCHVRLVGADQLATVAEAHIRGERIDEALVVEQIAPCFIEQDGNRTDIVVLACTHYPFLANVFRRLAPWPVDWLDPAEAIARRTVSLLKPRRADEELHHHNDLAVVTSRNPDYAIRRLMQGFGLHFA.

Substrate contacts are provided by residues 25-26 and 57-58; these read DS and YG. Cysteine 89 (proton donor/acceptor) is an active-site residue. 90–91 contributes to the substrate binding site; that stretch reads NT. The Proton donor/acceptor role is filled by cysteine 204. Position 205–206 (205–206) interacts with substrate; sequence TH.

The protein belongs to the aspartate/glutamate racemases family.

The enzyme catalyses L-glutamate = D-glutamate. The protein operates within cell wall biogenesis; peptidoglycan biosynthesis. Its function is as follows. Provides the (R)-glutamate required for cell wall biosynthesis. The chain is Glutamate racemase from Brucella anthropi (strain ATCC 49188 / DSM 6882 / CCUG 24695 / JCM 21032 / LMG 3331 / NBRC 15819 / NCTC 12168 / Alc 37) (Ochrobactrum anthropi).